The following is a 427-amino-acid chain: Stabilizer of axonemal microtubules 4 (427 aa).

3 disordered regions span residues 82–105 (TSKS…PLPW), 273–298 (RTLN…QPPQ), and 314–335 (GNKE…SYEQ). 2 stretches are compositionally biased toward polar residues: residues 287–298 (ASMSHRSYQPPQ) and 321–332 (FTLNNPSYVRSS).

As to quaternary structure, microtubule inner protein component of sperm flagellar doublet microtubules. Interacts with PPP1CA.

It is found in the cell projection. The protein localises to the cilium. Its subcellular location is the cytoplasm. It localises to the cytoskeleton. The protein resides in the flagellum axoneme. The protein is Stabilizer of axonemal microtubules 4 of Mus musculus (Mouse).